The chain runs to 315 residues: 2-oxoglutarate and iron-dependent oxygenase domain-containing protein 3 (315 aa).

The tract at residues 1–31 (MAPQRRGPPRIPEGSSAAERRRATSTKKDRL) is disordered. Topologically, residues 1 to 41 (MAPQRRGPPRIPEGSSAAERRRATSTKKDRLPREAQRTWLR) are cytoplasmic. Basic and acidic residues predominate over residues 18-31 (AERRRATSTKKDRL). Residues 42–62 (IVAFGVGLALVTCLLWSSVGI) traverse the membrane as a helical; Signal-anchor for type II membrane protein segment. The Lumenal segment spans residues 63–315 (DDDVAEVVAR…DHGIEDPVLT (253 aa)). Residues 203-305 (KPTFFSRINS…AITIAFTCNP (103 aa)) form the Fe2OG dioxygenase domain. The N-linked (GlcNAc...) asparagine glycan is linked to asparagine 211. 2 residues coordinate Fe cation: histidine 226 and aspartate 228. N-linked (GlcNAc...) asparagine glycosylation occurs at asparagine 263. Residue histidine 284 participates in Fe cation binding. The active site involves arginine 294. Arginine 294 is a 2-oxoglutarate binding site.

Belongs to the OGFOD3 family. Fe(2+) serves as cofactor. The cofactor is L-ascorbate.

Its subcellular location is the membrane. The sequence is that of 2-oxoglutarate and iron-dependent oxygenase domain-containing protein 3 (Ogfod3) from Mus musculus (Mouse).